Here is a 467-residue protein sequence, read N- to C-terminus: 3-isopropylmalate dehydratase large subunit (467 aa).

Positions 349, 409, and 412 each coordinate [4Fe-4S] cluster. The tract at residues 422–443 (PGQRSASTSNRNFEGRQGRGGR) is disordered.

This sequence belongs to the aconitase/IPM isomerase family. LeuC type 1 subfamily. As to quaternary structure, heterodimer of LeuC and LeuD. It depends on [4Fe-4S] cluster as a cofactor.

It catalyses the reaction (2R,3S)-3-isopropylmalate = (2S)-2-isopropylmalate. The protein operates within amino-acid biosynthesis; L-leucine biosynthesis; L-leucine from 3-methyl-2-oxobutanoate: step 2/4. Catalyzes the isomerization between 2-isopropylmalate and 3-isopropylmalate, via the formation of 2-isopropylmaleate. This is 3-isopropylmalate dehydratase large subunit from Paramagnetospirillum magneticum (strain ATCC 700264 / AMB-1) (Magnetospirillum magneticum).